The chain runs to 61 residues: Small ribosomal subunit protein uS14 (61 aa).

The Zn(2+) site is built by C24, C27, C40, and C43.

The protein belongs to the universal ribosomal protein uS14 family. Zinc-binding uS14 subfamily. In terms of assembly, part of the 30S ribosomal subunit. Contacts proteins S3 and S10. The cofactor is Zn(2+).

In terms of biological role, binds 16S rRNA, required for the assembly of 30S particles and may also be responsible for determining the conformation of the 16S rRNA at the A site. The polypeptide is Small ribosomal subunit protein uS14 (Clostridium acetobutylicum (strain ATCC 824 / DSM 792 / JCM 1419 / IAM 19013 / LMG 5710 / NBRC 13948 / NRRL B-527 / VKM B-1787 / 2291 / W)).